A 446-amino-acid chain; its full sequence is MTRKYFGTDGIRGQVGQGVITPQFFMQLGWAVGKVLAERHADGGGLVLIGKDTRISGYMFESALEAGLIAAGVDVGLLGPMPTPAIAYLTRTFQASAGIVISASHNPFRDNGIKLFNTQGVKLADDVEAAIEHQVDRPMVTAERLGKARRVPDAEGRYIEFCKGTLPWGFSLAGLTVVVDCANGATYNVAPKVFSELGAEVIAISTHPDGENINLNCGSTKLNNLQKQVLESHADIGIAFDGDGDRVQFVDERGEVVDGDQLLFIIAAHKQRHGGGCSGVVGTQMSNFGFELALEALKIPFERAKVGDRYVIEAMNNNGWKLGGESSGHIVCADVTTTGDGIIAALQVLRALNAEAQTLYELKQRMQKMPQVMVNVPVKRKLNLEENDMVQTAIAEAEQRMEGQGRVLLRPSGTEPVIRVMVEGQQHGMVSQLAHELAEVVGRATS.

Residue serine 104 is the Phosphoserine intermediate of the active site. Serine 104, aspartate 241, aspartate 243, and aspartate 245 together coordinate Mg(2+). At serine 104 the chain carries Phosphoserine.

This sequence belongs to the phosphohexose mutase family. It depends on Mg(2+) as a cofactor. Activated by phosphorylation.

It carries out the reaction alpha-D-glucosamine 1-phosphate = D-glucosamine 6-phosphate. In terms of biological role, catalyzes the conversion of glucosamine-6-phosphate to glucosamine-1-phosphate. This Teredinibacter turnerae (strain ATCC 39867 / T7901) protein is Phosphoglucosamine mutase.